The chain runs to 470 residues: Dendritic cell-specific transmembrane protein (470 aa).

Residues 1–34 (MGIWTSGTDIFLSLWEIYVSPRSPGWMDFIQHLG) are Cytoplasmic-facing. A helical transmembrane segment spans residues 35-55 (VCCLVALISVGLLSVAACWFL). Residues 56 to 57 (PS) are Extracellular-facing. The helical transmembrane segment at 58 to 78 (IIAAAASWIITCVLLCCSKHA) threads the bilayer. The Cytoplasmic segment spans residues 79–97 (RCFILLVFLSCGLREGRNA). A helical transmembrane segment spans residues 98–118 (LIAAGTGIVILGHVENIFHNF). Residues 119–209 (KGLLDGMTCN…MATTTEVLSS (91 aa)) lie on the Extracellular side of the membrane. The helical transmembrane segment at 210 to 230 (LGQKLLAFAGLSLVLLGTGLF) threads the bilayer. Residues 231 to 292 (MKRFLGPCGW…FWPTPKERKN (62 aa)) lie on the Cytoplasmic side of the membrane. The chain crosses the membrane as a helical span at residues 293-313 (LGLFFLPILIHLCIWVLFAAV). Residues 314-376 (DYLLYRLIFS…PKPKFLLSET (63 aa)) are Extracellular-facing. A helical transmembrane segment spans residues 377–397 (WVPLSVILLILVMLGLLSSIL). The Cytoplasmic portion of the chain corresponds to 398–470 (MQLKILVSAS…QMDMASADKS (73 aa)).

Monomer. Homodimer. Isoform 1 interacts (via the C-terminus cytoplasmic tail) with OS9 isoform 1 (via the C-terminus tail); the interaction induces DCSTAMP redistribution to the endoplasmic reticulum-Golgi intermediate compartment. Isoform 1 interacts (via the C-terminus cytoplasmic tail) with OS9 isoform 2 (via the C-terminus tail). Interacts with CREB3. Post-translationally, glycosylated. As to expression, preferentially expressed by dendritic cells (DCs). Detected in both immature and mature DCs. Highly expressed in lymph nodes, lung, kidney and liver. Expressed at lower levels in pancreas, bone marrow, spleen, leukocytes, in freshly isolated peripheral blood mononuclear cells (PBMC) and B-cells. Not expressed in freshly isolated monocytes.

Its subcellular location is the cell membrane. It localises to the endoplasmic reticulum membrane. The protein localises to the endoplasmic reticulum-Golgi intermediate compartment membrane. It is found in the endosome. In terms of biological role, probable cell surface receptor that plays several roles in cellular fusion, cell differentiation, bone and immune homeostasis. Plays a role in TNFSF11-mediated osteoclastogenesis. Cooperates with OCSTAMP in modulating cell-cell fusion in both osteoclasts and foreign body giant cells (FBGCs). Participates in osteoclast bone resorption. Involved in inducing the expression of tartrate-resistant acid phosphatase in osteoclast precursors. Plays a role in haematopoietic stem cell differentiation of bone marrow cells toward the myeloid lineage. Inhibits the development of neutrophilic granulocytes. Plays also a role in the regulation of dendritic cell (DC) antigen presentation activity by controlling phagocytic activity. Involved in the maintenance of immune self-tolerance and avoidance of autoimmune reactions. In Homo sapiens (Human), this protein is Dendritic cell-specific transmembrane protein (DCSTAMP).